The following is a 346-amino-acid chain: Serpentine receptor class gamma-20 (346 aa).

A run of 7 helical transmembrane segments spans residues V27–L47, F69–L89, P106–F128, I157–L177, I212–L232, T254–I274, and L279–L299.

This sequence belongs to the nematode receptor-like protein srg family.

It is found in the membrane. This chain is Serpentine receptor class gamma-20 (srg-20), found in Caenorhabditis elegans.